Reading from the N-terminus, the 607-residue chain is UvrABC system protein C (607 aa).

A GIY-YIG domain is found at Cys-11–Val-89. The region spanning Ser-201–Val-236 is the UVR domain.

The protein belongs to the UvrC family. In terms of assembly, interacts with UvrB in an incision complex.

It is found in the cytoplasm. Its function is as follows. The UvrABC repair system catalyzes the recognition and processing of DNA lesions. UvrC both incises the 5' and 3' sides of the lesion. The N-terminal half is responsible for the 3' incision and the C-terminal half is responsible for the 5' incision. This Tropheryma whipplei (strain Twist) (Whipple's bacillus) protein is UvrABC system protein C.